A 290-amino-acid polypeptide reads, in one-letter code: MNIAANIADDPETGDIDDGAGPALFADAPRSVSFNKLRKRLLRQVRQAFDDFDMLKGQKRWLVGLSGGKDSYGLLALLLDLKWRGLLSVELIACNLDQGQPNFPKHVLPDYLTKIGVRHRIEYRDTYSIVKEKVPEGATYCSLCSRLRRGNLYRIAREEGCDALVLGHHREDILETFFMNFFHGGRLASMPAKLLNDEGDLMVLRPLAYAAEDDLARFAAAMQFPIIPCDLCGSQDGLQRNAMKDMLADIERRMPGRKDTMLRALSHVNPSHLLDPKLFDFSSLGVTDPS.

The PP-loop motif motif lies at 66–71; that stretch reads SGGKDS. [4Fe-4S] cluster contacts are provided by C141, C144, and C232.

It belongs to the TtcA family. In terms of assembly, homodimer. It depends on Mg(2+) as a cofactor. Requires [4Fe-4S] cluster as cofactor.

It is found in the cytoplasm. The enzyme catalyses cytidine(32) in tRNA + S-sulfanyl-L-cysteinyl-[cysteine desulfurase] + AH2 + ATP = 2-thiocytidine(32) in tRNA + L-cysteinyl-[cysteine desulfurase] + A + AMP + diphosphate + H(+). Its pathway is tRNA modification. Functionally, catalyzes the ATP-dependent 2-thiolation of cytidine in position 32 of tRNA, to form 2-thiocytidine (s(2)C32). The sulfur atoms are provided by the cysteine/cysteine desulfurase (IscS) system. The polypeptide is tRNA-cytidine(32) 2-sulfurtransferase (Rhizobium etli (strain ATCC 51251 / DSM 11541 / JCM 21823 / NBRC 15573 / CFN 42)).